Here is a 208-residue protein sequence, read N- to C-terminus: Protein GrpE (208 aa).

A compositionally biased stretch (basic and acidic residues) spans 1–12; sequence MTNKDESVKKNT. The segment at 1–51 is disordered; sequence MTNKDESVKKNTESTVEETNVKQNIDDSVEQAEESKGHLQDEAIEETSDEN. Polar residues predominate over residues 13 to 23; sequence ESTVEETNVKQ. The span at 42–51 shows a compositional bias: acidic residues; the sequence is EAIEETSDEN.

This sequence belongs to the GrpE family. As to quaternary structure, homodimer.

It is found in the cytoplasm. In terms of biological role, participates actively in the response to hyperosmotic and heat shock by preventing the aggregation of stress-denatured proteins, in association with DnaK and GrpE. It is the nucleotide exchange factor for DnaK and may function as a thermosensor. Unfolded proteins bind initially to DnaJ; upon interaction with the DnaJ-bound protein, DnaK hydrolyzes its bound ATP, resulting in the formation of a stable complex. GrpE releases ADP from DnaK; ATP binding to DnaK triggers the release of the substrate protein, thus completing the reaction cycle. Several rounds of ATP-dependent interactions between DnaJ, DnaK and GrpE are required for fully efficient folding. In Staphylococcus aureus (strain COL), this protein is Protein GrpE.